Reading from the N-terminus, the 282-residue chain is Bifunctional protein FolD (282 aa).

Residues 165–167, Ser-190, and Ile-231 contribute to the NADP(+) site; that span reads NRS.

This sequence belongs to the tetrahydrofolate dehydrogenase/cyclohydrolase family. As to quaternary structure, homodimer.

The enzyme catalyses (6R)-5,10-methylene-5,6,7,8-tetrahydrofolate + NADP(+) = (6R)-5,10-methenyltetrahydrofolate + NADPH. It catalyses the reaction (6R)-5,10-methenyltetrahydrofolate + H2O = (6R)-10-formyltetrahydrofolate + H(+). It functions in the pathway one-carbon metabolism; tetrahydrofolate interconversion. In terms of biological role, catalyzes the oxidation of 5,10-methylenetetrahydrofolate to 5,10-methenyltetrahydrofolate and then the hydrolysis of 5,10-methenyltetrahydrofolate to 10-formyltetrahydrofolate. In Clostridium botulinum (strain Okra / Type B1), this protein is Bifunctional protein FolD.